The following is a 699-amino-acid chain: MNDERLVAINFEQQIFSKISEISESVGRAIRYCKEDGKVEGCETASHVDFLNHIHLLLGNYNNDLASSIEKKKSELIVRNSEGLPVMDIHEEVDKDGNIISASVAPQRISSVIDYADVFRSLPGFKNIENGGNRDTSSRIEELSEEEINDSTKNINYKAPEMGSLPSNTEFTSTPTLGVSEFPSKHGDHSDSKTYESPISNSQAASLSDSDMVQQIKNGSKTSLFKKGFLFKKNNAMQNRTTSNIKSNASAIEKNKETILNALNNSTLNENGHQDTQNEVLRDIVLEHPTAKAQDTGESNKDNNTSTSKHKKRPKRLSKFKQAKLETKKSGNKDHATSSEKLSLGNESIHSINETRSSSIEEPDNADNKIVEEEPMLLPVPTTAQGQNVLEAVQYDGLDSLEDMEALIQEMEEEGELDDNSESEEDEHGMTIGFSKELKAPPDPQYFTEKTGATTYVNGNDESLNVSDFPQIVEQEELSSKNPRKVHFSDTLEIKHVSRSGKANIEVIPAPTEEYDNLFGPDDFQSRISAFRKARSKLRAKENEEGNHSNATCTIKNDDLSNTLNNRAANTKLNPKEEDKSTVESELKAPPKEKSSETSKEYLNEPSVVKDFVVERTPSDKISESKEAFDAKVEEISDQRAISQRYYELRKKMIDNTGEYIKDEEEQAVIPLDENGNEKPKMSRFMTARLRGRVPIYEH.

3 disordered regions span residues 175-208 (PTLG…ASLS), 289-364 (PTAK…EEPD), and 539-603 (RAKE…KEYL). Over residues 183-194 (PSKHGDHSDSKT) the composition is skewed to basic and acidic residues. Residues 195-208 (YESPISNSQAASLS) are compositionally biased toward polar residues. A compositionally biased stretch (basic residues) spans 308 to 322 (SKHKKRPKRLSKFKQ). The segment covering 323-338 (AKLETKKSGNKDHATS) has biased composition (basic and acidic residues). Composition is skewed to polar residues over residues 339 to 360 (SEKL…SSSI) and 548 to 573 (HSNA…NTKL). The segment covering 574-603 (NPKEEDKSTVESELKAPPKEKSSETSKEYL) has biased composition (basic and acidic residues).

The protein localises to the cytoplasm. This is an uncharacterized protein from Schizosaccharomyces pombe (strain 972 / ATCC 24843) (Fission yeast).